The primary structure comprises 280 residues: Putative ABC transporter ATP-binding protein MTH_133 (280 aa).

The ABC transporter domain occupies 6-241; it reads IEAVDIRYTY…IDTIRGANLR (236 aa). 39-46 is an ATP binding site; it reads GPNGAGKS.

The protein belongs to the ABC transporter superfamily.

The protein resides in the cell membrane. Functionally, probably part of an ABC transporter complex. Responsible for energy coupling to the transport system. The polypeptide is Putative ABC transporter ATP-binding protein MTH_133 (Methanothermobacter thermautotrophicus (strain ATCC 29096 / DSM 1053 / JCM 10044 / NBRC 100330 / Delta H) (Methanobacterium thermoautotrophicum)).